We begin with the raw amino-acid sequence, 233 residues long: MSRSDVFADAPPADWAQAVPLLREGAHLPLLRSVARLRRSKTVYPPEGQVFAALHCTPLHTVRVVIVGQDPYHGAGQAHGLAFSVPQGVKPPPSLRNVLKEAAAQKPEAPAAAGMQHNGVQTDLTPWAEQGVLLLNTALTVEAGRAGSHAALGWHAVTDDIIRTVSERCPAVVFMLWGNHARQKAALVDTGRHLLLESVHPSPFSAHKGFLGCGHFVTANSWLAARGLLPVLW.

Catalysis depends on D70, which acts as the Proton acceptor.

Belongs to the uracil-DNA glycosylase (UDG) superfamily. UNG family.

The protein localises to the cytoplasm. The catalysed reaction is Hydrolyzes single-stranded DNA or mismatched double-stranded DNA and polynucleotides, releasing free uracil.. Excises uracil residues from the DNA which can arise as a result of misincorporation of dUMP residues by DNA polymerase or due to deamination of cytosine. In Oleidesulfovibrio alaskensis (strain ATCC BAA-1058 / DSM 17464 / G20) (Desulfovibrio alaskensis), this protein is Uracil-DNA glycosylase.